Here is a 502-residue protein sequence, read N- to C-terminus: Lysine--tRNA ligase (502 aa).

Mg(2+) is bound by residues Glu413 and Glu420.

Belongs to the class-II aminoacyl-tRNA synthetase family. Homodimer. It depends on Mg(2+) as a cofactor.

It is found in the cytoplasm. The catalysed reaction is tRNA(Lys) + L-lysine + ATP = L-lysyl-tRNA(Lys) + AMP + diphosphate. The polypeptide is Lysine--tRNA ligase (Aromatoleum aromaticum (strain DSM 19018 / LMG 30748 / EbN1) (Azoarcus sp. (strain EbN1))).